Consider the following 668-residue polypeptide: WD repeat-containing protein 48 homolog (668 aa).

8 WD repeats span residues 26–65 (QHRNGVNALQLDANNGKLYSAGRDAIIRVWNTRTDSSEKY), 71–110 (HHNDWVNDIVLCCNGRNLISASCDTTVKVWNAQKGFCMST), 113–152 (THRDYVQALAYAKDREQVASAGLDKAIFLWDVNTLTALTA), 164–203 (GSKDSIYSLAMNPSGTVIVSGSTENILRIWDPRTCMRRMK), 206–245 (GHTENVRCLVVSPDGNQVVSGSSDGTIKVWNLGQQRCVQT), 248–287 (VHKEGVWSLLMSENFQYIISGSRDRNIIVTEMRNPSNKTL), 290–329 (EEQAPVLSLGYNIDKTGVWATTWNSDIRCWKLPMYDRCTL), and 350–389 (KGGAAIKECAVLNDKRYIITKDSQDQVVVYDVLRVVKKEQ). The tract at residues 592–616 (ETTPSGGNANNSLQNSQSDANSEGS) is disordered.

This sequence belongs to the WD repeat WDR48 family. Catalytic component of the Usp12-46 deubiquitylase complex consisting of Usp12-46, Wdr20 and Uaf1; regulatory subunit that, together wtih Wdr20, stabilizes Usp12-46. The Usp12-46 deubiquitylase complex associates with arr/arrow; the interaction leads to deubiquitination and stabilization of arr/arrow.

Functionally, regulatory component of the Usp12-46 deubiquitylase complex. activates deubiquitination by increasing the catalytic turnover without increasing the affinity of deubiquitinating enzymes for the substrate. The complex deubiquitylates the wg/wingless-signaling receptor arr/arrow, which stabilizes the receptor and increases its concentration at the cell surface; this enhances the sensitivity of cells to wg/wingless-signal stimulation. This increases the amplitude and spatial range of the signaling response to the wg/wingless morphogen gradient, facilitating the precise concentration-dependent regulation of its target genes. Together with Wdr20 and Usp12-46 required for wg/wingless-mediated signaling in the wing imaginal disc and for wg/wingless-dependent regulation of intestinal stem cell proliferation. In Drosophila melanogaster (Fruit fly), this protein is WD repeat-containing protein 48 homolog.